We begin with the raw amino-acid sequence, 192 residues long: Adenylate kinase (192 aa).

Residue 12–17 (GSGKTT) coordinates ATP. Residues 34-63 (STGDLLRAEVASGSELGKTIDSFISKGNLV) are NMP. AMP is bound by residues T35, R40, 61–63 (NLV), 88–91 (GYPR), and Q95. The LID stretch occupies residues 130–136 (GRNRGAD). Residue R131 participates in ATP binding. R133 and R145 together coordinate AMP. R173 provides a ligand contact to ATP.

This sequence belongs to the adenylate kinase family. As to quaternary structure, monomer.

Its subcellular location is the cytoplasm. The catalysed reaction is AMP + ATP = 2 ADP. It functions in the pathway purine metabolism; AMP biosynthesis via salvage pathway; AMP from ADP: step 1/1. Functionally, catalyzes the reversible transfer of the terminal phosphate group between ATP and AMP. Plays an important role in cellular energy homeostasis and in adenine nucleotide metabolism. The chain is Adenylate kinase from Campylobacter jejuni subsp. jejuni serotype O:2 (strain ATCC 700819 / NCTC 11168).